Here is a 300-residue protein sequence, read N- to C-terminus: UDP-N-acetylenolpyruvoylglucosamine reductase (300 aa).

Residues Lys30–Ala194 enclose the FAD-binding PCMH-type domain. Arg174 is an active-site residue. Ser223 acts as the Proton donor in catalysis. Glu293 is a catalytic residue.

It belongs to the MurB family. FAD serves as cofactor.

Its subcellular location is the cytoplasm. The enzyme catalyses UDP-N-acetyl-alpha-D-muramate + NADP(+) = UDP-N-acetyl-3-O-(1-carboxyvinyl)-alpha-D-glucosamine + NADPH + H(+). Its pathway is cell wall biogenesis; peptidoglycan biosynthesis. Cell wall formation. This chain is UDP-N-acetylenolpyruvoylglucosamine reductase, found in Geobacter metallireducens (strain ATCC 53774 / DSM 7210 / GS-15).